The chain runs to 2312 residues: Protein Ycf2 (2312 aa).

1630–1637 provides a ligand contact to ATP; that stretch reads GSIGTGRS.

Belongs to the Ycf2 family.

Its subcellular location is the plastid. The protein localises to the chloroplast stroma. Functionally, probable ATPase of unknown function. Its presence in a non-photosynthetic plant (Epifagus virginiana) and experiments in tobacco indicate that it has an essential function which is probably not related to photosynthesis. This is Protein Ycf2 from Manihot esculenta (Cassava).